Reading from the N-terminus, the 485-residue chain is Glutamyl-tRNA(Gln) amidotransferase subunit A (485 aa).

Active-site charge relay system residues include Lys79 and Ser154. Residue Ser178 is the Acyl-ester intermediate of the active site.

The protein belongs to the amidase family. GatA subfamily. As to quaternary structure, heterotrimer of A, B and C subunits.

The enzyme catalyses L-glutamyl-tRNA(Gln) + L-glutamine + ATP + H2O = L-glutaminyl-tRNA(Gln) + L-glutamate + ADP + phosphate + H(+). Its function is as follows. Allows the formation of correctly charged Gln-tRNA(Gln) through the transamidation of misacylated Glu-tRNA(Gln) in organisms which lack glutaminyl-tRNA synthetase. The reaction takes place in the presence of glutamine and ATP through an activated gamma-phospho-Glu-tRNA(Gln). The chain is Glutamyl-tRNA(Gln) amidotransferase subunit A from Geobacillus thermodenitrificans (strain NG80-2).